The chain runs to 781 residues: LPS-assembly protein LptD (781 aa).

The N-terminal stretch at 1 to 24 (MKKNYYTVLSLSILTALYSTSSQA) is a signal peptide.

This sequence belongs to the LptD family. As to quaternary structure, component of the lipopolysaccharide transport and assembly complex. Interacts with LptE and LptA.

Its subcellular location is the cell outer membrane. In terms of biological role, together with LptE, is involved in the assembly of lipopolysaccharide (LPS) at the surface of the outer membrane. The polypeptide is LPS-assembly protein LptD (Histophilus somni (strain 129Pt) (Haemophilus somnus)).